The sequence spans 243 residues: MSIERITYDNFQNDPFINELDINDETKGAYEILKWAYQTYENDIVYSCSFGAESMVLIDLISQIKPDAQIVFLDTDLHFQETYDLIDRVKDKYPQLRIKMKKPELTLEEQGEKYNPALWKNDPNQCCYIRKIKPLEDVLSGAVAWISGLRRAQSPTRAHTNFINKDERFKSIKVCPLIYWTEEEVWSYIRDKDLPYNELHDQNYPSIGCIPCTSPVFDSNDSRAGRWSNSSKTECGLHVADKP.

[4Fe-4S] cluster is bound by residues Cys-126, Cys-127, Cys-209, and Cys-212. The active-site Nucleophile; cysteine thiosulfonate intermediate is the Cys-235.

Belongs to the PAPS reductase family. CysH subfamily. The cofactor is [4Fe-4S] cluster.

It localises to the cytoplasm. It catalyses the reaction [thioredoxin]-disulfide + sulfite + AMP + 2 H(+) = adenosine 5'-phosphosulfate + [thioredoxin]-dithiol. It functions in the pathway sulfur metabolism; hydrogen sulfide biosynthesis; sulfite from sulfate. Catalyzes the formation of sulfite from adenosine 5'-phosphosulfate (APS) using thioredoxin as an electron donor. This Staphylococcus epidermidis (strain ATCC 12228 / FDA PCI 1200) protein is Adenosine 5'-phosphosulfate reductase.